The following is a 180-amino-acid chain: Small ribosomal subunit protein uS5 (180 aa).

Residues 1-26 (MAEEKDKKQSSRRRNNRRTEKESEWQ) are disordered. The segment covering 17-26 (RRTEKESEWQ) has biased composition (basic and acidic residues). The S5 DRBM domain maps to 25 to 88 (WQERVVQIRR…ADGKKHLVNV (64 aa)).

This sequence belongs to the universal ribosomal protein uS5 family. Part of the 30S ribosomal subunit. Contacts proteins S4 and S8.

Functionally, with S4 and S12 plays an important role in translational accuracy. In terms of biological role, located at the back of the 30S subunit body where it stabilizes the conformation of the head with respect to the body. This chain is Small ribosomal subunit protein uS5, found in Synechococcus elongatus (strain ATCC 33912 / PCC 7942 / FACHB-805) (Anacystis nidulans R2).